The sequence spans 619 residues: TOX high mobility group box family member 4 (619 aa).

Disordered regions lie at residues 155 to 227 (LSLG…QKPV) and 306 to 335 (DPVP…TESP). A Phosphothreonine modification is found at Thr-176. Phosphoserine occurs at positions 178 and 182. The segment covering 183 to 193 (LHEDGVDDFRR) has biased composition (basic and acidic residues). Basic residues predominate over residues 208 to 218 (KQKAPKKRKKK). The Nuclear localization signal signature appears at 213–218 (KKRKKK). Positions 223-291 (PQKPVSAYAL…EYLKALAAYK (69 aa)) form a DNA-binding region, HMG box. Residue Thr-313 is modified to Phosphothreonine. Ser-315 is subject to Phosphoserine. A compositionally biased stretch (low complexity) spans 320-335 (TAADPASPAPASTESP). Arg-479 bears the Asymmetric dimethylarginine mark. Ser-531, Ser-548, Ser-550, Ser-558, Ser-560, and Ser-565 each carry phosphoserine.

In terms of assembly, component of the PNUTS-PP1 phosphatase complex, composed of PPP1R10/PNUTS, TOX4, WDR82 and PPP1CA or PPP1CB or PPP1CC. Interacts with PPP1R10/PNUTS. Interacts with FOXO1 and CREB1 (increased by cAMP); FOXO1 and CREB1 are required for full induction of TOX4-dependent activity and the interactions are inhibited by insulin.

The protein localises to the nucleus. The protein resides in the chromosome. With respect to regulation, in liver, recruited to target gene promoters following treatment with dexamethasone and cAMP. Binding is decreased in presence of insulin. Functionally, transcription factor that modulates cell fate reprogramming from the somatic state to the pluripotent and neuronal fate. In liver, controls the expression of hormone-regulated gluconeogenic genes such as G6PC1 and PCK1. This regulation is independent of the insulin receptor activation. Also acts as a regulatory component of protein phosphatase 1 (PP1) complexes. Component of the PNUTS-PP1 protein phosphatase complex, a PP1 complex that regulates RNA polymerase II transcription pause-release. PNUTS-PP1 also plays a role in the control of chromatin structure and cell cycle progression during the transition from mitosis into interphase. In Mus musculus (Mouse), this protein is TOX high mobility group box family member 4.